The following is a 440-amino-acid chain: Argininosuccinate lyase (440 aa).

It belongs to the lyase 1 family. Argininosuccinate lyase subfamily.

The protein resides in the cytoplasm. The catalysed reaction is 2-(N(omega)-L-arginino)succinate = fumarate + L-arginine. It participates in amino-acid biosynthesis; L-arginine biosynthesis; L-arginine from L-ornithine and carbamoyl phosphate: step 3/3. The polypeptide is Argininosuccinate lyase (Clostridium botulinum (strain Kyoto / Type A2)).